Here is a 182-residue protein sequence, read N- to C-terminus: Spermatophorin SP23 (182 aa).

Positions 1–7 are cleaved as a signal peptide; that stretch reads MVASIAG. 3 disordered regions span residues 1-26, 56-79, and 104-136; these read MVAS…FQPY, FQTI…NSIE, and IVVN…PPTI. A compositionally biased stretch (pro residues) spans 109–128; sequence APPPPPVIYQAPPPPPPPPI.

In terms of tissue distribution, spermatophore.

It localises to the secreted. In terms of biological role, structural protein of a layer within the wall of the spermatophore produced probably by cell type 4 of the bean-shaped gland (BAG). Fixation in the spermatophore seems to require covalent cross-linking of spermatophorins. This Tenebrio molitor (Yellow mealworm beetle) protein is Spermatophorin SP23 (SP23).